A 387-amino-acid polypeptide reads, in one-letter code: Patatin group D-2 (387 aa).

The signal sequence occupies residues 1 to 23; that stretch reads MATTKSFLILIVMILATTSSTFA. Residues 32-230 enclose the PNPLA domain; the sequence is LSIDGGGIKG…TVADPALLSI (199 aa). Residues 36–41 carry the GXGXXG motif; it reads GGGIKG. The short motif at 75-79 is the GXSXG element; that stretch reads GTSTG. S77 acts as the Nucleophile in catalysis. N-linked (GlcNAc...) asparagine glycosylation is present at N115. Residue D216 is the Proton acceptor of the active site. A DGA/G motif is present at residues 216–218; it reads DGA. Residues 361 to 385 are a coiled coil; that stretch reads ETYEEALKRFAKLLSDRKKLRANKA.

This sequence belongs to the patatin family. As to expression, tuber.

The protein resides in the vacuole. Functionally, probable lipolytic acyl hydrolase (LAH), an activity which is thought to be involved in the response of tubers to pathogens. This is Patatin group D-2 from Solanum tuberosum (Potato).